The primary structure comprises 535 residues: BAR/IMD domain-containing adapter protein 2 (535 aa).

Residues 1 to 250 (MSLSRSEEMH…AQLMQQMANS (250 aa)) form the IMD domain. Residues 1 to 251 (MSLSRSEEMH…QLMQQMANSN (251 aa)) are a coiled coil. Phosphoserine occurs at positions 262, 324, 326, and 337. The disordered stretch occupies residues 308–370 (SEDYNPWADR…TLPRSSSMAA (63 aa)). Over residues 321-335 (QPKSLSPPQSQSKLS) the composition is skewed to low complexity. T341 carries the post-translational modification Phosphothreonine. S347 carries the post-translational modification Phosphoserine. Residues 349 to 368 (TPKNSYATTENKTLPRSSSM) show a composition bias toward polar residues. T361 is modified (phosphothreonine). Phosphoserine occurs at positions 367, 385, 396, and 455. Positions 375–438 (NGRMRVKAIF…PFSYTRVLDS (64 aa)) constitute an SH3 domain. Residues 445–486 (HMSLQQGKSSSTGNLLDKDDLALPPPDYGTSSRAFPSQTAGT) are disordered. 2 stretches are compositionally biased toward polar residues: residues 447 to 458 (SLQQGKSSSTGN) and 473 to 486 (GTSSRAFPSQTAGT).

As to quaternary structure, homodimer. Interacts with CDC42 and RAC1 that have been activated by GTP binding. Binds TIAM1. Interacts with ATN1, ADGRB1, DIAPH1, EPS8, SHANK1, SHANK2, SHANK3, WASF1 and WASF2. Interacts with ENAH after recruitment of CDC42. In terms of processing, phosphorylated on tyrosine residues by INSR in response to insulin treatment. As to expression, ubiquitous.

It localises to the cytoplasm. The protein localises to the membrane. Its subcellular location is the cell projection. It is found in the filopodium. The protein resides in the ruffle. It localises to the cytoskeleton. Functionally, adapter protein that links membrane-bound small G-proteins to cytoplasmic effector proteins. Necessary for CDC42-mediated reorganization of the actin cytoskeleton and for RAC1-mediated membrane ruffling. Involved in the regulation of the actin cytoskeleton by WASF family members and the Arp2/3 complex. Plays a role in neurite growth. Acts syngeristically with ENAH to promote filipodia formation. Plays a role in the reorganization of the actin cytoskeleton in response to bacterial infection. Participates in actin bundling when associated with EPS8, promoting filopodial protrusions. This is BAR/IMD domain-containing adapter protein 2 (Baiap2) from Rattus norvegicus (Rat).